We begin with the raw amino-acid sequence, 153 residues long: MDQEAMGNIVLLAIVTLISVVQNAFFAHKVEHESKTHNGRSFQRTGTPAFERVYTANQNCVDAYPTFLVVLWSAGLFCSQVPAAFAGLMYLFVRQKYFVGYLGERTQSTPGYIFGKRIILFLFLMSLAGIFNYFLILFFGSDFENYIKTITTT.

Topologically, residues 1 to 8 are lumenal; it reads MDQEAMGN. The chain crosses the membrane as a helical span at residues 9-30; that stretch reads IVLLAIVTLISVVQNAFFAHKV. The Cytoplasmic portion of the chain corresponds to 31–52; it reads EHESKTHNGRSFQRTGTPAFER. Residues 53-77 traverse the membrane as a helical segment; it reads VYTANQNCVDAYPTFLVVLWSAGLF. The Lumenal segment spans residues 78-80; the sequence is CSQ. The helical transmembrane segment at 81–102 threads the bilayer; that stretch reads VPAAFAGLMYLFVRQKYFVGYL. At 103–107 the chain is on the cytoplasmic side; that stretch reads GERTQ. An intramembrane segment occupies 108 to 115; that stretch reads STPGYIFG. A helical membrane pass occupies residues 116 to 128; the sequence is KRIILFLFLMSLA. Topologically, residues 129-153 are lumenal; it reads GIFNYFLILFFGSDFENYIKTITTT.

This sequence belongs to the MAPEG family. As to quaternary structure, homotrimer. Interacts with LTC4S and ALOX5.

It localises to the nucleus membrane. The protein resides in the endoplasmic reticulum membrane. In terms of biological role, required for leukotriene biosynthesis by ALOX5 (5-lipoxygenase). Anchors ALOX5 to the membrane. Binds arachidonic acid, and could play an essential role in the transfer of arachidonic acid to ALOX5. Binds to MK-886, a compound that blocks the biosynthesis of leukotrienes. The polypeptide is Arachidonate 5-lipoxygenase-activating protein (ALOX5AP) (Sus scrofa (Pig)).